The following is a 356-amino-acid chain: NADH-quinone oxidoreductase subunit H (356 aa).

8 helical membrane passes run 18 to 38 (IVMV…IAYI), 87 to 107 (GVFL…WAVI), 120 to 140 (VGIL…IMAG), 166 to 186 (IGFV…SAIV), 202 to 222 (WLTF…VFYV), 265 to 285 (AITT…LPPI), 292 to 312 (WVPG…LFAM), and 328 to 348 (LGWK…AGVL).

This sequence belongs to the complex I subunit 1 family. In terms of assembly, NDH-1 is composed of 14 different subunits. Subunits NuoA, H, J, K, L, M, N constitute the membrane sector of the complex.

It localises to the cell inner membrane. The enzyme catalyses a quinone + NADH + 5 H(+)(in) = a quinol + NAD(+) + 4 H(+)(out). Functionally, NDH-1 shuttles electrons from NADH, via FMN and iron-sulfur (Fe-S) centers, to quinones in the respiratory chain. The immediate electron acceptor for the enzyme in this species is believed to be ubiquinone. Couples the redox reaction to proton translocation (for every two electrons transferred, four hydrogen ions are translocated across the cytoplasmic membrane), and thus conserves the redox energy in a proton gradient. This subunit may bind ubiquinone. The chain is NADH-quinone oxidoreductase subunit H from Nitrobacter hamburgensis (strain DSM 10229 / NCIMB 13809 / X14).